The sequence spans 868 residues: Probable inorganic carbon transporter subunit DabA (868 aa).

Zn(2+)-binding residues include Cys-392, Asp-394, His-574, and Cys-589.

Belongs to the inorganic carbon transporter (TC 9.A.2) DabA family. Forms a complex with DabB. Requires Zn(2+) as cofactor.

Its subcellular location is the cell membrane. Part of an energy-coupled inorganic carbon pump. This is Probable inorganic carbon transporter subunit DabA from Bacillus cereus (strain G9842).